The following is a 219-amino-acid chain: Histidinol-phosphate aminotransferase (219 aa).

This sequence belongs to the class-II pyridoxal-phosphate-dependent aminotransferase family. Histidinol-phosphate aminotransferase subfamily. As to quaternary structure, homodimer. Requires pyridoxal 5'-phosphate as cofactor.

The catalysed reaction is L-histidinol phosphate + 2-oxoglutarate = 3-(imidazol-4-yl)-2-oxopropyl phosphate + L-glutamate. The protein operates within amino-acid biosynthesis; L-histidine biosynthesis; L-histidine from 5-phospho-alpha-D-ribose 1-diphosphate: step 7/9. The protein is Histidinol-phosphate aminotransferase (hisC) of Mycolicibacterium smegmatis (Mycobacterium smegmatis).